Here is an 87-residue protein sequence, read N- to C-terminus: Small ribosomal subunit protein uS15 (87 aa).

It belongs to the universal ribosomal protein uS15 family. As to quaternary structure, part of the 30S ribosomal subunit. Forms a bridge to the 50S subunit in the 70S ribosome, contacting the 23S rRNA.

One of the primary rRNA binding proteins, it binds directly to 16S rRNA where it helps nucleate assembly of the platform of the 30S subunit by binding and bridging several RNA helices of the 16S rRNA. Its function is as follows. Forms an intersubunit bridge (bridge B4) with the 23S rRNA of the 50S subunit in the ribosome. This is Small ribosomal subunit protein uS15 from Ruminiclostridium cellulolyticum (strain ATCC 35319 / DSM 5812 / JCM 6584 / H10) (Clostridium cellulolyticum).